The chain runs to 579 residues: Phosphatidylinositol/phosphatidylcholine transfer protein SFH9 (579 aa).

A CRAL-TRIO domain is found at 145–319 (EYEEVQQYYP…FLGGNCKCAH (175 aa)). The tract at residues 372-419 (DMSSPDGGHVRERESHPEHDKRAQLSNQAEAVGVGRMEQSDSTSPLPN) is disordered. Residues 379-394 (GHVRERESHPEHDKRA) show a composition bias toward basic and acidic residues. The stretch at 512-539 (QEKEDILRDSLDRIKSIEQDLQKTKKAL) forms a coiled coil.

It belongs to the SFH family.

The protein resides in the golgi apparatus membrane. Its subcellular location is the cell membrane. Functionally, required for transport of secretory proteins from the Golgi complex. Catalyzes the transfer of phosphatidylinositol and phosphatidylcholine between membranes in vitro. This is Phosphatidylinositol/phosphatidylcholine transfer protein SFH9 (SFH9) from Arabidopsis thaliana (Mouse-ear cress).